Here is a 215-residue protein sequence, read N- to C-terminus: Uridine kinase (215 aa).

Residue 16-23 (GASASGKS) coordinates ATP.

The protein belongs to the uridine kinase family.

It is found in the cytoplasm. It carries out the reaction uridine + ATP = UMP + ADP + H(+). It catalyses the reaction cytidine + ATP = CMP + ADP + H(+). The protein operates within pyrimidine metabolism; CTP biosynthesis via salvage pathway; CTP from cytidine: step 1/3. It participates in pyrimidine metabolism; UMP biosynthesis via salvage pathway; UMP from uridine: step 1/1. The protein is Uridine kinase of Aliivibrio salmonicida (strain LFI1238) (Vibrio salmonicida (strain LFI1238)).